The primary structure comprises 642 residues: Threonine--tRNA ligase (642 aa).

The region spanning 1 to 61 is the TGS domain; the sequence is MPVITLPDGS…DTDAQLAIIT (61 aa). Residues 243 to 534 form a catalytic region; it reads DHRKIGKQLD…LTEEFAGFFP (292 aa). The Zn(2+) site is built by Cys334, His385, and His511.

It belongs to the class-II aminoacyl-tRNA synthetase family. In terms of assembly, homodimer. The cofactor is Zn(2+).

Its subcellular location is the cytoplasm. The catalysed reaction is tRNA(Thr) + L-threonine + ATP = L-threonyl-tRNA(Thr) + AMP + diphosphate + H(+). Functionally, catalyzes the attachment of threonine to tRNA(Thr) in a two-step reaction: L-threonine is first activated by ATP to form Thr-AMP and then transferred to the acceptor end of tRNA(Thr). Also edits incorrectly charged L-seryl-tRNA(Thr). The sequence is that of Threonine--tRNA ligase from Pectobacterium carotovorum subsp. carotovorum (strain PC1).